The sequence spans 195 residues: uncharacterized protein (195 aa).

The chain crosses the membrane as a helical span at residues isoleucine 175 to glycine 195.

It is found in the membrane. This is an uncharacterized protein from Methanocaldococcus jannaschii (strain ATCC 43067 / DSM 2661 / JAL-1 / JCM 10045 / NBRC 100440) (Methanococcus jannaschii).